Here is a 321-residue protein sequence, read N- to C-terminus: tRNA dimethylallyltransferase (321 aa).

24 to 31 is a binding site for ATP; that stretch reads GPTASGKS. 26 to 31 is a binding site for substrate; that stretch reads TASGKS. Interaction with substrate tRNA regions lie at residues 49-52 and 172-176; these read DSMQ and QRIVR.

The protein belongs to the IPP transferase family. As to quaternary structure, monomer. The cofactor is Mg(2+).

It catalyses the reaction adenosine(37) in tRNA + dimethylallyl diphosphate = N(6)-dimethylallyladenosine(37) in tRNA + diphosphate. Functionally, catalyzes the transfer of a dimethylallyl group onto the adenine at position 37 in tRNAs that read codons beginning with uridine, leading to the formation of N6-(dimethylallyl)adenosine (i(6)A). In Mesorhizobium japonicum (strain LMG 29417 / CECT 9101 / MAFF 303099) (Mesorhizobium loti (strain MAFF 303099)), this protein is tRNA dimethylallyltransferase.